The chain runs to 3966 residues: Histone-lysine N-methyltransferase 2A (3966 aa).

Disordered regions lie at residues 1–106 and 130–231; these read MAHS…LLRV and VFGE…GVKI. A Menin-binding motif (MBM) motif is present at residues 6–25; the sequence is RWRFPARPGTTGGGGGGGRR. Residues 15-29 show a composition bias toward gly residues; it reads TTGGGGGGGRRGLGG. Residues 75 to 102 are compositionally biased toward low complexity; the sequence is GAAAASAASSSSASSSSSSSSSASSGPA. The Integrase domain-binding motif 1 (IBM1) motif lies at 121 to 132; the sequence is GTNLRRFRAVFG. Ser-134 and Ser-140 each carry phosphoserine; by CK2. The Integrase domain-binding motif 2 (IBM2) signature appears at 145 to 150; sequence QFLGFG. Position 151 is a phosphoserine (Ser-151). Positions 167 to 178 form a DNA-binding region, a.T hook 1; the sequence is KASPRKPRGRPR. Ser-195 bears the Phosphoserine mark. Basic and acidic residues predominate over residues 200–218; the sequence is SETKSADKIKKKDSKSIEK. A DNA-binding region (a.T hook 2) is located at residues 215–225; the sequence is SIEKKRGRPPT. The residue at position 237 (Lys-237) is an N6-acetyllysine. Positions 299–307 form a DNA-binding region, a.T hook 3; that stretch reads RRRGRPPST. The tract at residues 322-343 is disordered; sequence LEKPQKVRKDKEGTPPLTKEDK. N6-acetyllysine is present on Lys-371. The disordered stretch occupies residues 440–590; it reads RLESTPNSRF…PWLMPPTIPL (151 aa). Positions 450–489 are enriched in low complexity; sequence SATSCGSSEKSSAASQHSSQMSSDSSRSSSPSIDTTSDSQ. At Ser-516 the chain carries Phosphoserine. Residues 544–557 show a composition bias toward low complexity; it reads LPTLQSAPQQQTSS. The span at 558-571 shows a compositional bias: pro residues; the sequence is SPPPPLLTPPPPLQ. Lys-634 carries the post-translational modification N6-acetyllysine. A Phosphoserine modification is found at Ser-678. Disordered regions lie at residues 711 to 943, 963 to 1003, 1034 to 1064, and 1101 to 1161; these read ESVT…ADVA, RGNL…TSSI, IEKSKSLKQTDQPKAQGQESDSSETSVRGPR, and ILSS…CQVP. Low complexity-rich tracts occupy residues 717–730 and 760–790; these read SNRTSSGASSSGVS and LSTSELSPLTPPSSVSSSLSIPVSPLAASAL. Composition is skewed to polar residues over residues 791–806 and 817–830; these read NPTFTFPSHSLTQSGE and QTSALAEPFSSNSP. A Phosphothreonine modification is found at Thr-837. Over residues 843–887 the composition is skewed to basic and acidic residues; that stretch reads EKGRKKDTAPEELSKDRDADKSVEKDKSRERDREREKENKRESRK. A Phosphoserine modification is found at Ser-923. Residues 989 to 1003 are compositionally biased toward low complexity; it reads SAPSSSTVKHSTSSI. Polar residues predominate over residues 1040–1059; the sequence is LKQTDQPKAQGQESDSSETS. Residue Ser-1053 is modified to Phosphoserine. Basic and acidic residues predominate over residues 1101–1111; the sequence is ILSSMGNDDKS. An N6-acetyllysine modification is found at Lys-1127. The CXXC-type zinc-finger motif lies at 1144-1192; sequence KKGRRSRRCGQCPGCQVPEDCGICTNCLDKPKFGGRNIKKQCCKMRKCQ. Cys-1152, Cys-1155, Cys-1158, Cys-1164, Cys-1167, Cys-1170, Cys-1186, and Cys-1191 together coordinate Zn(2+). The segment at 1196–1390 is disordered; that stretch reads WMPSKASLQK…PLSNGISSKQ (195 aa). The span at 1217–1229 shows a compositional bias: basic and acidic residues; it reads SKTTEKKESKEST. Residues 1230-1241 are compositionally biased toward low complexity; the sequence is AVKSPLEPAQKA. An N6-acetyllysine modification is found at Lys-1232. A compositionally biased stretch (basic and acidic residues) spans 1245-1270; the sequence is PREEPAPKKSSSEPPPRKPVEEKSEE. Over residues 1369–1390 the composition is skewed to polar residues; the sequence is KQENAGTLNILNPLSNGISSKQ. PHD-type zinc fingers lie at residues 1430 to 1481, 1478 to 1532, and 1565 to 1629; these read RVVC…CKFC, CKFC…CVRC, and GNFC…CTER. The interval 1583–1599 is interaction with histone H3K4me3; the sequence is KMMQCGKCDRWVHSKCE. The 131-residue stretch at 1637 to 1767 folds into the Bromo domain; sequence ALEKELQASL…SFFIRQMERV (131 aa). Disordered stretches follow at residues 1665–1714 and 1807–1870; these read YRQA…EGVK and WQER…PGID. The segment covering 1828-1849 has biased composition (pro residues); it reads APKPKGPGEPDSPTPLHPPTPP. Ser-1839 is subject to Phosphoserine. Position 1847 is a phosphothreonine (Thr-1847). Ser-1860 is subject to Phosphoserine. A C2HC pre-PHD-type zinc finger spans residues 1872–1912; sequence NRQCALCLMYGDDSANDAGRLLYIGQNEWTHVNCALWSAEV. The PHD-type 4 zinc finger occupies 1933–1980; the sequence is LRCEFCQKPGATVGCCLTSCTSNYHFMCSRAKNCVFLDDKKVYCQRHR. The 57-residue stretch at 2020–2076 folds into the FYR N-terminal domain; sequence NIHMMIGSMTIDCLGILNDLSDCEDKLFPIGYQCSRVYWSTTDARKRCVYTCKIMEC. Phosphoserine is present on Ser-2100. The interval 2147 to 2174 is disordered; that stretch reads RTPSYSPTQRSPGCRPLPSAGSPTPTTH. Position 2148 is a phosphothreonine (Thr-2148). A phosphoserine mark is found at Ser-2152 and Ser-2202. Disordered stretches follow at residues 2214-2339, 2371-2619, 2639-2673, and 2709-2759; these read VRTG…ATPG, RGQR…SARA, EDIPFYSNSTGKKRGKRSAEGQVDGADDLSTSDED, and KISQ…DAGE. Residues 2218-2230 are compositionally biased toward low complexity; it reads SAYSRSSVSSVPS. 2 stretches are compositionally biased toward polar residues: residues 2250–2284 and 2308–2320; these read LSSSANLGHSAPPSSSSQRTVGGSKTSHLDGSSPS and TSSSKSTDGSAHS. Basic and acidic residues-rich tracts occupy residues 2411 to 2422 and 2430 to 2440; these read ILHEHIGSSSRD and SSKETCKEKHS. Residues 2498 to 2509 are compositionally biased toward polar residues; the sequence is GQSTQVEGSSKE. Residue Lys-2524 forms a Glycyl lysine isopeptide (Lys-Gly) (interchain with G-Cter in SUMO2) linkage. Residues 2528–2537 show a composition bias toward polar residues; it reads ENQSKNTQKE. The residue at position 2560 (Ser-2560) is a Phosphoserine. The segment covering 2569–2588 has biased composition (polar residues); sequence PSPNNTLSQDPQSNNYQNLP. Ser-2607 is modified (phosphoserine). Residues 2609–2618 show a composition bias toward basic residues; sequence KRRYPRRSAR. The span at 2663-2673 shows a compositional bias: acidic residues; sequence GADDLSTSDED. The segment covering 2722-2737 has biased composition (polar residues); it reads SDTSVTATSRKSSQIP. The segment covering 2740–2759 has biased composition (basic and acidic residues); it reads NGKENGTENLKIDRPEDAGE. Position 2792 is a phosphoserine (Ser-2792). A 9aaTAD motif is present at residues 2843 to 2851; that stretch reads SDIMDFVLK. At Ser-2951 the chain carries Phosphoserine. N6-acetyllysine is present on Lys-2954. Disordered regions lie at residues 2958–3060 and 3164–3239; these read ITEK…NAAV and AAQS…PSNI. Polar residues predominate over residues 3012 to 3025; the sequence is HGNSQDLTRNSGTP. Ser-3032 carries the post-translational modification Phosphoserine. Over residues 3035-3060 the composition is skewed to polar residues; sequence VPVQNQKYVPSSTDSPGPSQISNAAV. Over residues 3167–3178 the composition is skewed to low complexity; the sequence is SSFPPNISSPPS. Residues 3196 to 3212 are compositionally biased toward polar residues; sequence EANQRTDLTTTVATPSS. Residues 3214-3229 are compositionally biased toward basic residues; the sequence is LKKRPISRLHTRKNKK. Thr-3369 carries the phosphothreonine modification. Lys-3459 bears the N6-acetyllysine mark. Residues 3462-3640 are disordered; the sequence is TLTSQRDRDP…AMEEEESGFS (179 aa). The segment covering 3475–3487 has biased composition (polar residues); sequence PGTQPSNFTQTAE. A compositionally biased stretch (low complexity) spans 3501–3528; that stretch reads PSAKPASSASPGSSPSSGQQSGSSSVPG. Residues Ser-3510 and Ser-3523 each carry the phosphoserine modification. The segment covering 3558–3570 has biased composition (basic and acidic residues); it reads TSSEAHIPHRDTD. The FYR C-terminal domain maps to 3663–3744; it reads KKGLVFEISS…KHCRNYKFRF (82 aa). The short motif at 3759–3764 is the WDR5 interaction motif (WIN) element; sequence GSARAE. Positions 3782–3805 are disordered; it reads HRQPPEYNPNDEEEEEVQLKSARR. Residues 3826–3942 form the SET domain; that stretch reads EAVGVYRSPI…RGEELTYDYK (117 aa). Residues His-3836 and Arg-3838 each contribute to the S-adenosyl-L-methionine site. Cys-3879 is modified (S-methylcysteine; by autocatalysis). S-adenosyl-L-methionine contacts are provided by residues Tyr-3880 and 3903–3904; that span reads NH. Residues Cys-3906 and Cys-3954 each coordinate Zn(2+). In terms of domain architecture, Post-SET spans 3950-3966; the sequence is NKLPCNCGAKKCRKFLN. Asn-3955 provides a ligand contact to S-adenosyl-L-methionine. Residues Cys-3956 and Cys-3961 each contribute to the Zn(2+) site.

It belongs to the class V-like SAM-binding methyltransferase superfamily. Histone-lysine methyltransferase family. TRX/MLL subfamily. MLL cleavage product N320 heterodimerizes with MLL cleavage product C180 (via SET and FYRC domains). Component of some MLL1/MLL complex, at least composed of the core components KMT2A/MLL1, ASH2L, HCFC1/HCF1, HCFC2, WDR5, DPY30 and RBBP5, as well as the facultative components BACC1, CHD8, E2F6, HSP70, INO80C, KANSL1, LAS1L, MAX, MCRS1, MEN1, MGA, KAT8/MOF, PELP1, PHF20, PRP31, RING2, RUVB1/TIP49A, RUVB2/TIP49B, SENP3, TAF1, TAF4, TAF6, TAF7, TAF9 and TEX10. Interacts (via WIN motif) with WDR5; the interaction is direct. Interaction with WDR5 is required for stable interaction with ASH2L and RBBP5, and thereby also for optimal histone methyltransferase activity. Interacts with KAT8/MOF; the interaction is direct. Interacts with SBF1 and PPP1R15A. Interacts with ZNF335. Interacts with CLOCK and BMAL1 in a circadian manner. Interacts with PPIE; this results in decreased histone H3 methyltransferase activity. Interacts with CREBBP. Interacts with the WRAD complex composed of WDR5, RBBP5, ASH2L and DPY30. Interacts (via MBM motif) with MEN1. Interacts (via IBM motifs) with PSIP1 (via IBD domain) with moderate affinity whereas the KMT2A-MEN1 complex interacts with a greater affinity; MEN1 enhances interaction of KMT2A with PSIP1. Phosphorylation increases its affinity for PSIP1. Forms a complex with CREBBP and CREB1. Proteolytic cleavage by TASP1 generates MLL cleavage 3product N320 and MLL cleavage product C180, which reassemble through a non-covalent association. 2 cleavage sites exist, cleavage site 1 (CS1) and cleavage site 2 (CS2), to generate MLL cleavage products N320 and C180. CS2 is the major site. In terms of processing, phosphorylation increases its interaction with PSIP1. Post-translationally, auto-methylated at Cys-3879: auto-methylation is inhibited by the WRAD complex and unmodified histone H3.

It localises to the nucleus. It catalyses the reaction L-lysyl(4)-[histone H3] + S-adenosyl-L-methionine = N(6)-methyl-L-lysyl(4)-[histone H3] + S-adenosyl-L-homocysteine + H(+). The enzyme catalyses N(6)-methyl-L-lysyl(4)-[histone H3] + S-adenosyl-L-methionine = N(6),N(6)-dimethyl-L-lysyl(4)-[histone H3] + S-adenosyl-L-homocysteine + H(+). It carries out the reaction L-cysteinyl-[protein] + S-adenosyl-L-methionine = S-methyl-L-cysteinyl-[protein] + S-adenosyl-L-homocysteine + H(+). Histone methyltransferase that plays an essential role in early development and hematopoiesis. Catalytic subunit of the MLL1/MLL complex, a multiprotein complex that mediates both methylation of 'Lys-4' of histone H3 (H3K4me) complex and acetylation of 'Lys-16' of histone H4 (H4K16ac). Catalyzes methyl group transfer from S-adenosyl-L-methionine to the epsilon-amino group of 'Lys-4' of histone H3 (H3K4) via a non-processive mechanism. Part of chromatin remodeling machinery predominantly forms H3K4me1 and H3K4me2 methylation marks at active chromatin sites where transcription and DNA repair take place. Has weak methyltransferase activity by itself, and requires other component of the MLL1/MLL complex to obtain full methyltransferase activity. Has no activity toward histone H3 phosphorylated on 'Thr-3', less activity toward H3 dimethylated on 'Arg-8' or 'Lys-9', while it has higher activity toward H3 acetylated on 'Lys-9'. Binds to unmethylated CpG elements in the promoter of target genes and helps maintain them in the nonmethylated state. Required for transcriptional activation of HOXA9. Promotes PPP1R15A-induced apoptosis. Plays a critical role in the control of circadian gene expression and is essential for the transcriptional activation mediated by the CLOCK-BMAL1 heterodimer. Establishes a permissive chromatin state for circadian transcription by mediating a rhythmic methylation of 'Lys-4' of histone H3 (H3K4me) and this histone modification directs the circadian acetylation at H3K9 and H3K14 allowing the recruitment of CLOCK-BMAL1 to chromatin. Also has auto-methylation activity on Cys-3879 in absence of histone H3 substrate. This is Histone-lysine N-methyltransferase 2A (Kmt2a) from Mus musculus (Mouse).